Reading from the N-terminus, the 469-residue chain is UDP-N-acetylmuramate--L-alanine ligase (469 aa).

113–119 (GAHGKTT) contributes to the ATP binding site.

Belongs to the MurCDEF family.

The protein resides in the cytoplasm. The enzyme catalyses UDP-N-acetyl-alpha-D-muramate + L-alanine + ATP = UDP-N-acetyl-alpha-D-muramoyl-L-alanine + ADP + phosphate + H(+). It functions in the pathway cell wall biogenesis; peptidoglycan biosynthesis. In terms of biological role, cell wall formation. This chain is UDP-N-acetylmuramate--L-alanine ligase, found in Syntrophobacter fumaroxidans (strain DSM 10017 / MPOB).